Consider the following 422-residue polypeptide: Tyrosine--tRNA ligase (422 aa).

Tyrosine 35 contributes to the L-tyrosine binding site. The 'HIGH' region motif lies at 40-49 (PTAPSLHVGH). 2 residues coordinate L-tyrosine: tyrosine 170 and glutamine 174. A 'KMSKS' region motif is present at residues 231–235 (KFGKT). Lysine 234 is an ATP binding site. The S4 RNA-binding domain maps to 353 to 419 (APVVDLFAEV…GKKNLAAVEI (67 aa)).

The protein belongs to the class-I aminoacyl-tRNA synthetase family. TyrS type 1 subfamily. In terms of assembly, homodimer.

Its subcellular location is the cytoplasm. It carries out the reaction tRNA(Tyr) + L-tyrosine + ATP = L-tyrosyl-tRNA(Tyr) + AMP + diphosphate + H(+). Its function is as follows. Catalyzes the attachment of tyrosine to tRNA(Tyr) in a two-step reaction: tyrosine is first activated by ATP to form Tyr-AMP and then transferred to the acceptor end of tRNA(Tyr). In Streptomyces coelicolor (strain ATCC BAA-471 / A3(2) / M145), this protein is Tyrosine--tRNA ligase.